The chain runs to 201 residues: Dephospho-CoA kinase (201 aa).

Residues 3–201 form the DPCK domain; the sequence is WIGLTGGIAC…KWLEELKNQN (199 aa). 11–16 is a binding site for ATP; the sequence is ACGKST.

Belongs to the CoaE family.

The protein resides in the cytoplasm. The enzyme catalyses 3'-dephospho-CoA + ATP = ADP + CoA + H(+). The protein operates within cofactor biosynthesis; coenzyme A biosynthesis; CoA from (R)-pantothenate: step 5/5. Catalyzes the phosphorylation of the 3'-hydroxyl group of dephosphocoenzyme A to form coenzyme A. The sequence is that of Dephospho-CoA kinase from Bdellovibrio bacteriovorus (strain ATCC 15356 / DSM 50701 / NCIMB 9529 / HD100).